The following is a 160-amino-acid chain: Protein-export protein SecB (160 aa).

It belongs to the SecB family. Homotetramer, a dimer of dimers. One homotetramer interacts with 1 SecA dimer.

It is found in the cytoplasm. Its function is as follows. One of the proteins required for the normal export of preproteins out of the cell cytoplasm. It is a molecular chaperone that binds to a subset of precursor proteins, maintaining them in a translocation-competent state. It also specifically binds to its receptor SecA. This Rhizobium johnstonii (strain DSM 114642 / LMG 32736 / 3841) (Rhizobium leguminosarum bv. viciae) protein is Protein-export protein SecB.